Reading from the N-terminus, the 620-residue chain is Aspartic protease 1 (620 aa).

The Cytoplasmic segment spans residues 1-110; the sequence is MSPSSRFRNL…LGKAVGLSTS (110 aa). The propeptide occupies 1–258; it reads MSPSSRFRNL…SKKDDGNLSG (258 aa). Residues 27–31 form an important for proper cellular trafficking region; that stretch reads YASLL. A helical; Signal-anchor for type II membrane protein transmembrane segment spans residues 111-131; that stretch reads VICVVALFGIVCLCLYGLVNF. Topologically, residues 132-620 are lumenal; that stretch reads SFTSVETSPL…KQIGFARLKN (489 aa). Residues 138–174 are disordered; sequence TSPLDDPRNSPVMGELGNPQASTPSSARADTPARHDR. The segment covering 156 to 165 has biased composition (polar residues); the sequence is PQASTPSSAR. One can recognise a Peptidase A1 domain in the interval 275 to 616; it reads YYTEIYVGSP…DYDNKQIGFA (342 aa). Residues D293 and D476 contribute to the active site. An intrachain disulfide couples C513 to C550.

This sequence belongs to the peptidase A1 family. Proteolytically cleaved into the soluble active mature form by, at least, cysteine protease CPL. Undergoes at least four processing steps; the first cleavage removes the propeptide resulting in the production of a soluble 45 kDa protein, which is further processed into a 35 kDa form followed by an additional processing into the final active 30 kDa form.

The protein resides in the membrane. Its subcellular location is the vacuole. In terms of biological role, aspartyl protease which is dispensable for protein degradation in the vacuolar compartment (VAC) or for tachyzoite and bradyzoite viability. The sequence is that of Aspartic protease 1 from Toxoplasma gondii.